The following is a 163-amino-acid chain: Single-stranded DNA-binding protein 1 (163 aa).

In terms of domain architecture, SSB spans 1-104 (MINNVVLVGR…VVAESFQLLE (104 aa)). Residues 106-163 (RATREGGSPNSYNNGGYNNAPSNNSYSASSQQTPNFSRDESPFGNSNPMDISDDDLPF) are disordered. Residues 111–135 (GGSPNSYNNGGYNNAPSNNSYSASS) are compositionally biased toward low complexity. Positions 158-163 (DDDLPF) match the Important for interaction with partner proteins motif.

Homotetramer.

Functionally, plays an important role in DNA replication, recombination and repair. Binds to ssDNA and to an array of partner proteins to recruit them to their sites of action during DNA metabolism. The protein is Single-stranded DNA-binding protein 1 (ssb1) of Streptococcus agalactiae serotype III (strain NEM316).